Reading from the N-terminus, the 744-residue chain is Polyribonucleotide nucleotidyltransferase (744 aa).

Mg(2+) contacts are provided by Asp515 and Asp521. A KH domain is found at 581–640 (PRVITVQVPVDKIGEVIGPKGKMINQIQDDTGADISIEDDGTVFIGATDGPSAEAARQAI). The region spanning 652–724 (GERFVGTVVK…PRGKLSLHAV (73 aa)) is the S1 motif domain.

It belongs to the polyribonucleotide nucleotidyltransferase family. Requires Mg(2+) as cofactor.

Its subcellular location is the cytoplasm. The enzyme catalyses RNA(n+1) + phosphate = RNA(n) + a ribonucleoside 5'-diphosphate. Functionally, involved in mRNA degradation. Catalyzes the phosphorolysis of single-stranded polyribonucleotides processively in the 3'- to 5'-direction. This is Polyribonucleotide nucleotidyltransferase from Beutenbergia cavernae (strain ATCC BAA-8 / DSM 12333 / CCUG 43141 / JCM 11478 / NBRC 16432 / NCIMB 13614 / HKI 0122).